The sequence spans 504 residues: ATP synthase subunit alpha (504 aa).

171–178 (GDRQTGKT) provides a ligand contact to ATP.

This sequence belongs to the ATPase alpha/beta chains family. As to quaternary structure, F-type ATPases have 2 components, CF(1) - the catalytic core - and CF(0) - the membrane proton channel. CF(1) has five subunits: alpha(3), beta(3), gamma(1), delta(1), epsilon(1). CF(0) has three main subunits: a(1), b(2) and c(9-12). The alpha and beta chains form an alternating ring which encloses part of the gamma chain. CF(1) is attached to CF(0) by a central stalk formed by the gamma and epsilon chains, while a peripheral stalk is formed by the delta and b chains.

The protein localises to the cell inner membrane. It carries out the reaction ATP + H2O + 4 H(+)(in) = ADP + phosphate + 5 H(+)(out). Its function is as follows. Produces ATP from ADP in the presence of a proton gradient across the membrane. The alpha chain is a regulatory subunit. The sequence is that of ATP synthase subunit alpha from Helicobacter hepaticus (strain ATCC 51449 / 3B1).